Here is a 287-residue protein sequence, read N- to C-terminus: ATP synthase gamma chain (287 aa).

This sequence belongs to the ATPase gamma chain family. In terms of assembly, F-type ATPases have 2 components, CF(1) - the catalytic core - and CF(0) - the membrane proton channel. CF(1) has five subunits: alpha(3), beta(3), gamma(1), delta(1), epsilon(1). CF(0) has three main subunits: a, b and c.

Its subcellular location is the cell inner membrane. Produces ATP from ADP in the presence of a proton gradient across the membrane. The gamma chain is believed to be important in regulating ATPase activity and the flow of protons through the CF(0) complex. The sequence is that of ATP synthase gamma chain from Xanthomonas campestris pv. campestris (strain B100).